A 61-amino-acid polypeptide reads, in one-letter code: Large ribosomal subunit protein uL30 (61 aa).

Belongs to the universal ribosomal protein uL30 family. Part of the 50S ribosomal subunit.

The sequence is that of Large ribosomal subunit protein uL30 from Treponema denticola (strain ATCC 35405 / DSM 14222 / CIP 103919 / JCM 8153 / KCTC 15104).